A 359-amino-acid polypeptide reads, in one-letter code: Gene 58 protein (359 aa).

The next 11 membrane-spanning stretches (helical) occupy residues 12–32, 45–65, 75–95, 103–123, 132–152, 154–174, 220–240, 246–266, 271–289, 296–318, and 330–350; these read TMAA…CFLF, VDEL…FFCF, YLDL…ICLQ, YLPI…PVTF, YANA…YLLL, FGSV…IAGL, LCVV…AGVY, VLKT…GMGY, ATFV…VFVL, SVLF…TIML, and IVLS…NVLY.

This sequence belongs to the herpesviridae BMRF2 family.

Its subcellular location is the host membrane. This is Gene 58 protein (58) from Equine herpesvirus 2 (strain 86/87) (EHV-2).